We begin with the raw amino-acid sequence, 373 residues long: Opsin Rh1 (373 aa).

At 1–54 the chain is on the extracellular side; sequence MDSFAAVATQLGPHFAALSNGSVVDKVTPDMAHLISPYWNQFPAMDPIWAKILT. N-linked (GlcNAc...) asparagine glycosylation is present at N20. A helical membrane pass occupies residues 55–75; it reads AYMIIIGMISWCGNGVVIYIF. Topologically, residues 76–86 are cytoplasmic; sequence ATTKSLRTPAN. Residues 87–107 traverse the membrane as a helical segment; that stretch reads LLVINLAISDFGIMITNTPMM. The Extracellular portion of the chain corresponds to 108-124; sequence GINLYFETWVLGPMMCD. A disulfide bridge links C123 with C200. The chain crosses the membrane as a helical span at residues 125-145; sequence IYAGLGSAFGCSSIWSMCMIS. Over 146–162 the chain is Cytoplasmic; it reads LDRYQVIVKGMAGRPMT. Residues 163–183 form a helical membrane-spanning segment; that stretch reads IPLALGKIAYIWFMSSIWCLA. The Extracellular portion of the chain corresponds to 184-219; it reads PVFGWSRYVPEGNLTSCGIDYLERDWNPRSYLIFYS. N196 carries N-linked (GlcNAc...) asparagine glycosylation. The chain crosses the membrane as a helical span at residues 220-240; it reads IFVYYIPLFLICYSYWFIIAA. Residues 241–276 lie on the Cytoplasmic side of the membrane; sequence VSAHEKAMREQAKKMNVKSLRSSEDADKSAEGKLAK. Residues 277–297 traverse the membrane as a helical segment; sequence VALVTISLWFMAWTPYLVINC. Residues 298–308 are Extracellular-facing; that stretch reads MGLFKFEGLTP. Residues 309-331 form a helical membrane-spanning segment; it reads LNTIWGACFAKSAACYNPIVYGI. An N6-(retinylidene)lysine modification is found at K319. Topologically, residues 332-373 are cytoplasmic; the sequence is SHPKYRLALKEKCPCCVFGKVDDGKSSEAQSQATNSEAESKA. Residues 354 to 373 form a disordered region; it reads DGKSSEAQSQATNSEAESKA. Residues 358–373 show a composition bias toward polar residues; the sequence is SEAQSQATNSEAESKA.

The protein belongs to the G-protein coupled receptor 1 family. Opsin subfamily. Post-translationally, phosphorylated on some or all of the serine and threonine residues present in the C-terminal region.

It is found in the cell projection. The protein localises to the rhabdomere membrane. In terms of biological role, visual pigments are the light-absorbing molecules that mediate vision. They consist of an apoprotein, opsin, covalently linked to cis-retinal. This chain is Opsin Rh1 (ninaE), found in Drosophila pseudoobscura pseudoobscura (Fruit fly).